The sequence spans 837 residues: MANILKTIIENDKGEIRRLEKMADKVFKYEDQMAALTDDQLKAKTVEFKERYQNGESLDSLLYEAFAVVREGAKRVLGLFPYKVQVMGGIVLHHGDVPEMRTGEGKTLTATMPVYLNALSGKGVHVVTVNEYLSERDATEMGELYSWLGLSVGINLATKSPMEKKEAYECDITYSTNSEIGFDYLRDNMVVRAENMVQRPLNYALVDEVDSILIDEARTPLIVSGANAVETSQLYHMADHYVKSLNKDDYIIDVQSKTIGLSDSGIDRAESYFKLENLYDIENVALTHFIDNALRANYIMLLDIDYVVSEEQEILIVDQFTGRTMEGRRYSDGLHQAIEAKEGVPIQDETKTSASITYQNLFRMYKKLSGMTGTGKTEEEEFREIYNIRVIPIPTNRPVQRIDHSDLLYASIESKFKAVVEDVKARYQKGQPVLVGTVAVETSDYISKKLVAAGVPHEVLNAKNHYREAQIIMNAGQRGAVTIATNMAGRGTDIKLGEGVRELGGLCVIGTERHESRRIDNQLRGRSGRQGDPGESQFYLSLEDDLMKRFGSERLKGIFERLNMSEEAIESRMLTRQVEAAQKRVEGNNYDTRKQVLQYDDVMREQREIIYAQRYDVITADRDLAPEIQAMIKRTIERVVDGHARAKQDEKLEAILNFAKYNLLPEDSITMEDLSGLSDKAIKEELFQRALKVYDSQVSKLRDEEAVKEFQKVLILRVVDNKWTDHIDALDQLRNAVGLRGYAQNNPVVEYQAEGFRMFNDMIGSIEFDVTRLMMKAQIHEQERPQAERHISTTATRNIAAHQASMPEDLDLNQIGRNELCPCGSGKKFKNCHGKRQ.

Residues Q85, 103–107 (GEGKT), and D493 each bind ATP. Residues C821, C823, C832, and H833 each contribute to the Zn(2+) site.

The protein belongs to the SecA family. In terms of assembly, monomer and homodimer. Part of the essential Sec protein translocation apparatus which comprises SecA, SecYEG and auxiliary proteins SecDF. Other proteins may also be involved. The cofactor is Zn(2+).

It is found in the cell membrane. Its subcellular location is the cytoplasm. The enzyme catalyses ATP + H2O + cellular proteinSide 1 = ADP + phosphate + cellular proteinSide 2.. In terms of biological role, part of the Sec protein translocase complex. Interacts with the SecYEG preprotein conducting channel. Has a central role in coupling the hydrolysis of ATP to the transfer of proteins into and across the cell membrane, serving as an ATP-driven molecular motor driving the stepwise translocation of polypeptide chains across the membrane. This chain is Protein translocase subunit SecA, found in Streptococcus pneumoniae serotype 2 (strain D39 / NCTC 7466).